Consider the following 130-residue polypeptide: Small ribosomal subunit protein uS8 (130 aa).

The protein belongs to the universal ribosomal protein uS8 family. Part of the 30S ribosomal subunit. Contacts proteins S5 and S12.

In terms of biological role, one of the primary rRNA binding proteins, it binds directly to 16S rRNA central domain where it helps coordinate assembly of the platform of the 30S subunit. This Pseudomonas aeruginosa (strain UCBPP-PA14) protein is Small ribosomal subunit protein uS8.